A 92-amino-acid chain; its full sequence is MYIYKSFIYSEVINMALATKVKEFLEEKLKQEKIDRKYLAQVTNIPYTTVSRIMRAEANREFNPEIDTILKIAKYFNCTMDEVIKRKVHNNS.

The HTH cro/C1-type domain occupies 25-83 (LEEKLKQEKIDRKYLAQVTNIPYTTVSRIMRAEANREFNPEIDTILKIAKYFNCTMDEV). Residues 36–55 (RKYLAQVTNIPYTTVSRIMR) constitute a DNA-binding region (H-T-H motif).

This is an uncharacterized protein from Rickettsia prowazekii (strain Madrid E).